Here is a 186-residue protein sequence, read N- to C-terminus: Ribosome-recycling factor (186 aa).

This sequence belongs to the RRF family.

The protein resides in the cytoplasm. Its function is as follows. Responsible for the release of ribosomes from messenger RNA at the termination of protein biosynthesis. May increase the efficiency of translation by recycling ribosomes from one round of translation to another. The protein is Ribosome-recycling factor of Brucella abortus (strain S19).